A 206-amino-acid polypeptide reads, in one-letter code: HTH-type transcriptional regulator Hpr (206 aa).

The region spanning 13–157 (ALLFSQRMAQ…MMCIIRNIYG (145 aa)) is the HTH marR-type domain. Positions 63–86 (ISEIAKFGVMHVSTAFNFSKKLEE) form a DNA-binding region, H-T-H motif. A disordered region spans residues 186-206 (SEELEDSADAAEKAAKANQIV).

As to quaternary structure, homodimer.

Its function is as follows. Negative regulator of protease production and sporulation. The chain is HTH-type transcriptional regulator Hpr from Bacillus pumilus (strain SAFR-032).